A 1151-amino-acid polypeptide reads, in one-letter code: SCF E3 ubiquitin ligase complex F-box protein GRR1 (1151 aa).

Residues Met1–Asp18 show a composition bias toward basic and acidic residues. The interval Met1–Val72 is disordered. A compositionally biased stretch (low complexity) spans Asn38–Asn49. Basic and acidic residues predominate over residues Arg58 to Val72. Ser199 and Ser300 each carry phosphoserine. An F-box domain is found at Val314–His361. LRR repeat units follow at residues Gly399–Phe423, Cys424–Gly449, Ile450–Gln475, Ala476–Ala501, Asn502–Leu527, Ser528–His553, Asn554–Gly582, Cys583–Lys608, Cys609–His634, Cys635–Cys660, Cys661–Lys685, Cys686–Tyr714, and Cys715–Ala740. The span at Ala1066–Asn1080 shows a compositional bias: low complexity. Disordered stretches follow at residues Ala1066–Phe1090 and Val1118–Leu1151.

As to quaternary structure, interacts with SKP1. Component of the probable SCF(GRR1) complex containing CDC53, SKP1, RBX1 and GRR1.

It localises to the membrane. It functions in the pathway protein modification; protein ubiquitination. Functionally, substrate recognition component of a SCF (SKP1-CUL1-F-box protein) E3 ubiquitin-protein ligase complex which mediates the ubiquitination and subsequent proteasomal degradation of target proteins. Recognizes and directs ubiquitination of phosphorylated CLN1, CLN2 and GIC2. Probably constitutes the primary response element required for the generation or interpretation of the signal that induces glucose repression. The polypeptide is SCF E3 ubiquitin ligase complex F-box protein GRR1 (GRR1) (Saccharomyces cerevisiae (strain ATCC 204508 / S288c) (Baker's yeast)).